The primary structure comprises 503 residues: Catalase (503 aa).

Positions Met1 to Gly26 are disordered. Residues His56 and Asn129 contribute to the active site. Tyr339 contributes to the heme binding site.

This sequence belongs to the catalase family. As to quaternary structure, homodimer. It depends on heme as a cofactor.

It carries out the reaction 2 H2O2 = O2 + 2 H2O. Functionally, decomposes hydrogen peroxide into water and oxygen; serves to protect cells from the toxic effects of hydrogen peroxide. The sequence is that of Catalase (katA) from Staphylococcus haemolyticus (strain JCSC1435).